A 302-amino-acid chain; its full sequence is Large ribosomal subunit protein uL29m (302 aa).

The transit peptide at 1 to 38 (MASSGAARPAASRVLQRCQPFSSSTSCAAPVTTWRTLA) directs the protein to the mitochondrion. The tract at residues 255–302 (EPVADHLETPETSGQEKVGELSPAGAVDPSTILASKTGKPVTDAPRSS) is disordered.

Belongs to the universal ribosomal protein uL29 family. As to quaternary structure, component of the mitochondrial large ribosomal subunit. Mature mitochondrial ribosomes consist of a small (37S) and a large (54S) subunit. The 37S subunit contains at least 33 different proteins and 1 molecule of RNA (15S). The 54S subunit contains at least 45 different proteins and 1 molecule of RNA (21S).

It is found in the mitochondrion. In Pyricularia oryzae (strain 70-15 / ATCC MYA-4617 / FGSC 8958) (Rice blast fungus), this protein is Large ribosomal subunit protein uL29m (MRPL4).